The sequence spans 230 residues: 7-cyano-7-deazaguanine synthase (230 aa).

8–18 (LSGGMDSAVVT) is an ATP binding site. C186, C196, C199, and C202 together coordinate Zn(2+).

It belongs to the QueC family. The cofactor is Zn(2+).

The catalysed reaction is 7-carboxy-7-deazaguanine + NH4(+) + ATP = 7-cyano-7-deazaguanine + ADP + phosphate + H2O + H(+). The protein operates within purine metabolism; 7-cyano-7-deazaguanine biosynthesis. Its function is as follows. Catalyzes the ATP-dependent conversion of 7-carboxy-7-deazaguanine (CDG) to 7-cyano-7-deazaguanine (preQ(0)). The chain is 7-cyano-7-deazaguanine synthase from Xylella fastidiosa (strain M12).